Reading from the N-terminus, the 20-residue chain is Insulin-like growth factor-binding protein 2 (20 aa).

Residues 2–20 (LVFYCPKCTAERQTACPKL) form the IGFBP N-terminal domain.

As to quaternary structure, binds IGF2 more than IGF1. Post-translationally, N-glycosylated.

It localises to the secreted. Its function is as follows. Inhibits IGF-mediated growth and developmental rates. IGF-binding proteins prolong the half-life of the IGFs and have been shown to either inhibit or stimulate the growth promoting effects of the IGFs on cell culture. They alter the interaction of IGFs with their cell surface receptors. The sequence is that of Insulin-like growth factor-binding protein 2 (igfbp2) from Oncorhynchus tshawytscha (Chinook salmon).